A 348-amino-acid chain; its full sequence is Aspartate carbamoyltransferase catalytic subunit (348 aa).

Carbamoyl phosphate is bound by residues Arg59 and Thr60. Lys87 is a binding site for L-aspartate. 3 residues coordinate carbamoyl phosphate: Arg109, His142, and Gln145. Positions 182 and 253 each coordinate L-aspartate. Carbamoyl phosphate contacts are provided by Gly294 and Pro295.

The protein belongs to the aspartate/ornithine carbamoyltransferase superfamily. ATCase family. In terms of assembly, heterododecamer (2C3:3R2) of six catalytic PyrB chains organized as two trimers (C3), and six regulatory PyrI chains organized as three dimers (R2).

The catalysed reaction is carbamoyl phosphate + L-aspartate = N-carbamoyl-L-aspartate + phosphate + H(+). It functions in the pathway pyrimidine metabolism; UMP biosynthesis via de novo pathway; (S)-dihydroorotate from bicarbonate: step 2/3. Functionally, catalyzes the condensation of carbamoyl phosphate and aspartate to form carbamoyl aspartate and inorganic phosphate, the committed step in the de novo pyrimidine nucleotide biosynthesis pathway. The chain is Aspartate carbamoyltransferase catalytic subunit from Prochlorococcus marinus (strain MIT 9313).